A 306-amino-acid chain; its full sequence is Tryptophan 2,3-dioxygenase (306 aa).

Substrate-binding positions include 75–79 (FIIQH), Tyr137, and Arg141. His264 provides a ligand contact to heme. A substrate-binding site is contributed by Thr278.

This sequence belongs to the tryptophan 2,3-dioxygenase family. Homotetramer. It depends on heme as a cofactor.

The catalysed reaction is L-tryptophan + O2 = N-formyl-L-kynurenine. The protein operates within amino-acid degradation; L-tryptophan degradation via kynurenine pathway; L-kynurenine from L-tryptophan: step 1/2. Its function is as follows. Heme-dependent dioxygenase that catalyzes the oxidative cleavage of the L-tryptophan (L-Trp) pyrrole ring and converts L-tryptophan to N-formyl-L-kynurenine. Catalyzes the oxidative cleavage of the indole moiety. The sequence is that of Tryptophan 2,3-dioxygenase from Paraburkholderia phytofirmans (strain DSM 17436 / LMG 22146 / PsJN) (Burkholderia phytofirmans).